Consider the following 108-residue polypeptide: UPF0145 protein MADE_1007770 (108 aa).

This sequence belongs to the UPF0145 family.

The chain is UPF0145 protein MADE_1007770 from Alteromonas mediterranea (strain DSM 17117 / CIP 110805 / LMG 28347 / Deep ecotype).